The sequence spans 296 residues: Ribosomal protein L11 methyltransferase (296 aa).

S-adenosyl-L-methionine contacts are provided by Thr146, Gly167, Asp189, and Asn231.

Belongs to the methyltransferase superfamily. PrmA family.

It is found in the cytoplasm. The catalysed reaction is L-lysyl-[protein] + 3 S-adenosyl-L-methionine = N(6),N(6),N(6)-trimethyl-L-lysyl-[protein] + 3 S-adenosyl-L-homocysteine + 3 H(+). In terms of biological role, methylates ribosomal protein L11. The protein is Ribosomal protein L11 methyltransferase of Haemophilus influenzae (strain ATCC 51907 / DSM 11121 / KW20 / Rd).